A 179-amino-acid polypeptide reads, in one-letter code: Large ribosomal subunit protein uL5 (179 aa).

Belongs to the universal ribosomal protein uL5 family. Part of the 50S ribosomal subunit; part of the 5S rRNA/L5/L18/L25 subcomplex. Contacts the 5S rRNA and the P site tRNA. Forms a bridge to the 30S subunit in the 70S ribosome.

In terms of biological role, this is one of the proteins that bind and probably mediate the attachment of the 5S RNA into the large ribosomal subunit, where it forms part of the central protuberance. In the 70S ribosome it contacts protein S13 of the 30S subunit (bridge B1b), connecting the 2 subunits; this bridge is implicated in subunit movement. Contacts the P site tRNA; the 5S rRNA and some of its associated proteins might help stabilize positioning of ribosome-bound tRNAs. In Staphylococcus haemolyticus (strain JCSC1435), this protein is Large ribosomal subunit protein uL5.